A 201-amino-acid chain; its full sequence is Probable nicotinate-nucleotide adenylyltransferase (201 aa).

It belongs to the NadD family.

It carries out the reaction nicotinate beta-D-ribonucleotide + ATP + H(+) = deamido-NAD(+) + diphosphate. It participates in cofactor biosynthesis; NAD(+) biosynthesis; deamido-NAD(+) from nicotinate D-ribonucleotide: step 1/1. Functionally, catalyzes the reversible adenylation of nicotinate mononucleotide (NaMN) to nicotinic acid adenine dinucleotide (NaAD). This chain is Probable nicotinate-nucleotide adenylyltransferase, found in Clostridium botulinum (strain Kyoto / Type A2).